A 2036-amino-acid chain; its full sequence is Putative mediator of RNA polymerase II transcription subunit 24 (2036 aa).

8 disordered regions span residues 51–70 (NNNN…NNNV), 159–184 (DNIE…NNIG), 212–451 (SPSP…QTTT), 501–580 (KSVN…NNNN), 754–840 (NLKN…SHQK), 928–1124 (NNNN…NKDL), 1375–1419 (NNKN…NNNN), and 1565–1608 (NSSA…NGDT). Low complexity predominate over residues 212-229 (SPSPSSSSSSSTSPSSQQ). A compositionally biased stretch (basic and acidic residues) spans 260–270 (EIMKVKEEPIK). 6 stretches are compositionally biased toward low complexity: residues 273-291 (TTTT…STTT), 300-311 (TNGNGEETTITT), 387-451 (QPQP…QTTT), 501-539 (KSVN…NSNN), 547-580 (NNNN…NNNN), and 754-770 (NLKN…NSNG). A coiled-coil region spans residues 505–584 (NNNNNNNNNN…NNNNNNINNI (80 aa)). Positions 778–787 (GSSTDGSNKL) are enriched in polar residues. Low complexity-rich tracts occupy residues 788 to 808 (SSTN…LNGN) and 928 to 943 (NNNN…NNKN). Residues 943-977 (NKNSKKSNNKNKNNKNNNKKNKNNNNNNNNNNNNN) adopt a coiled-coil conformation. The span at 944 to 964 (KNSKKSNNKNKNNKNNNKKNK) shows a compositional bias: basic residues. Low complexity-rich tracts occupy residues 965–999 (NNNN…NNNN), 1017–1118 (NNNN…NNNN), 1385–1419 (SNNS…NNNN), 1565–1584 (NSSA…LPKS), and 1594–1608 (SSNT…NGDT). A coiled-coil region spans residues 1915–1968 (SKNQSLKKKQKLKQKKQQHNNNNGGEYNIDQDHIEQIQQQQQQYQKQQQQRKDE).

This sequence belongs to the Mediator complex subunit 24 family. As to quaternary structure, component of the Mediator complex.

Its subcellular location is the nucleus. In terms of biological role, component of the Mediator complex, a coactivator involved in the regulated transcription of nearly all RNA polymerase II-dependent genes. Mediator functions as a bridge to convey information from gene-specific regulatory proteins to the basal RNA polymerase II transcription machinery. Mediator is recruited to promoters by direct interactions with regulatory proteins and serves as a scaffold for the assembly of a functional preinitiation complex with RNA polymerase II and the general transcription factors. In Dictyostelium discoideum (Social amoeba), this protein is Putative mediator of RNA polymerase II transcription subunit 24 (med24).